The chain runs to 426 residues: Serine--tRNA ligase (426 aa).

L-serine is bound at residue 233 to 235; sequence TAE. 264 to 266 contributes to the ATP binding site; sequence RSE. Glutamate 287 provides a ligand contact to L-serine. 351–354 lines the ATP pocket; that stretch reads EISS. An L-serine-binding site is contributed by serine 387.

It belongs to the class-II aminoacyl-tRNA synthetase family. Type-1 seryl-tRNA synthetase subfamily. Homodimer. The tRNA molecule binds across the dimer.

The protein localises to the cytoplasm. The enzyme catalyses tRNA(Ser) + L-serine + ATP = L-seryl-tRNA(Ser) + AMP + diphosphate + H(+). The catalysed reaction is tRNA(Sec) + L-serine + ATP = L-seryl-tRNA(Sec) + AMP + diphosphate + H(+). The protein operates within aminoacyl-tRNA biosynthesis; selenocysteinyl-tRNA(Sec) biosynthesis; L-seryl-tRNA(Sec) from L-serine and tRNA(Sec): step 1/1. In terms of biological role, catalyzes the attachment of serine to tRNA(Ser). Is also able to aminoacylate tRNA(Sec) with serine, to form the misacylated tRNA L-seryl-tRNA(Sec), which will be further converted into selenocysteinyl-tRNA(Sec). The sequence is that of Serine--tRNA ligase from Pseudomonas putida (strain GB-1).